The primary structure comprises 147 residues: Endoribonuclease YbeY (147 aa).

Zn(2+)-binding residues include His107, His111, and His117.

It belongs to the endoribonuclease YbeY family. The cofactor is Zn(2+).

The protein resides in the cytoplasm. Its function is as follows. Single strand-specific metallo-endoribonuclease involved in late-stage 70S ribosome quality control and in maturation of the 3' terminus of the 16S rRNA. In Solibacter usitatus (strain Ellin6076), this protein is Endoribonuclease YbeY.